We begin with the raw amino-acid sequence, 236 residues long: Small ribosomal subunit protein uS2c (236 aa).

Belongs to the universal ribosomal protein uS2 family.

It is found in the plastid. The protein resides in the chloroplast. The polypeptide is Small ribosomal subunit protein uS2c (rps2) (Lactuca sativa (Garden lettuce)).